A 264-amino-acid polypeptide reads, in one-letter code: H-2 class II histocompatibility antigen, E-D beta chain (264 aa).

A signal peptide spans 1–31; sequence MVWLPRVPCVAAVILLLTVLSPPVALVRDTR. The tract at residues 32–121 is beta-1; sequence PRFLEYVTSE…ISDKFLVRRR (90 aa). At 32–225 the chain is on the extracellular side; the sequence is PRFLEYVTSE…KAQSTSAQNK (194 aa). 2 disulfides stabilise this stretch: Cys42/Cys106 and Cys144/Cys200. The N-linked (GlcNAc...) asparagine glycan is linked to Asn46. The segment at 122 to 215 is beta-2; it reads VEPTVTVYPT…SLTDPVTVEW (94 aa). Residues 124–214 enclose the Ig-like C1-type domain; sequence PTVTVYPTKT…PSLTDPVTVE (91 aa). Residues 216–225 are connecting peptide; that stretch reads KAQSTSAQNK. A helical membrane pass occupies residues 226 to 248; the sequence is MLSGVGGFVLGLLFLGAGLFIYF. At 249-264 the chain is on the cytoplasmic side; it reads RNQKGQSGLQPTGLLS.

It belongs to the MHC class II family.

The protein localises to the membrane. The polypeptide is H-2 class II histocompatibility antigen, E-D beta chain (Mus musculus (Mouse)).